Consider the following 720-residue polypeptide: DNA ligase (720 aa).

NAD(+) is bound by residues D60–D64, S109–L110, and E140. K142 serves as the catalytic N6-AMP-lysine intermediate. Residues R163 and E201 each contribute to the NAD(+) site. Positions G220 to D239 are disordered. Positions 320 and 344 each coordinate NAD(+). Residues C438, C441, C456, and C461 each contribute to the Zn(2+) site. Positions K619 to D709 constitute a BRCT domain.

It belongs to the NAD-dependent DNA ligase family. LigA subfamily. Requires Mn(2+) as cofactor. Mg(2+) is required as a cofactor.

It catalyses the reaction NAD(+) + (deoxyribonucleotide)n-3'-hydroxyl + 5'-phospho-(deoxyribonucleotide)m = (deoxyribonucleotide)n+m + AMP + beta-nicotinamide D-nucleotide.. Functionally, DNA ligase that catalyzes the formation of phosphodiester linkages between 5'-phosphoryl and 3'-hydroxyl groups in double-stranded DNA using NAD as a coenzyme and as the energy source for the reaction. It is essential for DNA replication and repair of damaged DNA. The polypeptide is DNA ligase (Aquifex aeolicus (strain VF5)).